Here is a 309-residue protein sequence, read N- to C-terminus: Olfactory receptor 1A2 (309 aa).

Residues 1–25 (MKKENQSFNLDFILLGVTSQQEQNN) lie on the Extracellular side of the membrane. The N-linked (GlcNAc...) asparagine glycan is linked to N5. A helical membrane pass occupies residues 26–49 (VFFVIFLCIYPITLTGNLLIILAI). Over 50-57 (CADIRLHN) the chain is Cytoplasmic. The helical transmembrane segment at 58-79 (PMYFLLANLSLVDIIFSSVTIP) threads the bilayer. At 80-100 (KVLANHLLGSKFISFGGCLMQ) the chain is on the extracellular side. C97 and C189 are disulfide-bonded. The chain crosses the membrane as a helical span at residues 101–120 (MYFMIALAKADSYTLAAMAY). Residues 121–139 (DRAVAISCPLHYTTIMSPR) are Cytoplasmic-facing. A helical membrane pass occupies residues 140-158 (SCILLIAGSWVIGNTSALP). The Extracellular segment spans residues 159 to 195 (HTLLTASLSFCGNQEVANFYCDIMPLLKLSCSDVHFN). A helical transmembrane segment spans residues 196 to 218 (VKMMYLGVGVFSLPLLCIIVSYV). Residues 219-235 (QVFSTVFQVPSTKSLFK) are Cytoplasmic-facing. Residues 236 to 258 (AFCTCGSHLTVVFLYYGTTMGMY) traverse the membrane as a helical segment. At 259–270 (FRPLTSYSPKDA) the chain is on the extracellular side. Residues 271-290 (VITVMYVAVTPALNPFIYSL) form a helical membrane-spanning segment. The Cytoplasmic portion of the chain corresponds to 291 to 309 (RNWDMKAALQKLFSKRISS).

It belongs to the G-protein coupled receptor 1 family.

The protein resides in the cell membrane. Odorant receptor. The sequence is that of Olfactory receptor 1A2 (OR1A2) from Homo sapiens (Human).